A 440-amino-acid chain; its full sequence is tRNA(Ile)-lysidine synthase (440 aa).

29–34 (SGGLDS) lines the ATP pocket.

This sequence belongs to the tRNA(Ile)-lysidine synthase family.

It localises to the cytoplasm. It carries out the reaction cytidine(34) in tRNA(Ile2) + L-lysine + ATP = lysidine(34) in tRNA(Ile2) + AMP + diphosphate + H(+). In terms of biological role, ligates lysine onto the cytidine present at position 34 of the AUA codon-specific tRNA(Ile) that contains the anticodon CAU, in an ATP-dependent manner. Cytidine is converted to lysidine, thus changing the amino acid specificity of the tRNA from methionine to isoleucine. The polypeptide is tRNA(Ile)-lysidine synthase (Pectobacterium atrosepticum (strain SCRI 1043 / ATCC BAA-672) (Erwinia carotovora subsp. atroseptica)).